Reading from the N-terminus, the 397-residue chain is Phosphoglycerate kinase (397 aa).

Residues 21-23, arginine 36, 59-62, arginine 118, and arginine 151 each bind substrate; these read DFN and HCGR. Residues lysine 201, glutamate 323, and 353–356 each bind ATP; that span reads GGDT.

Belongs to the phosphoglycerate kinase family. Monomer.

It is found in the cytoplasm. It carries out the reaction (2R)-3-phosphoglycerate + ATP = (2R)-3-phospho-glyceroyl phosphate + ADP. Its pathway is carbohydrate degradation; glycolysis; pyruvate from D-glyceraldehyde 3-phosphate: step 2/5. The sequence is that of Phosphoglycerate kinase from Bartonella henselae (strain ATCC 49882 / DSM 28221 / CCUG 30454 / Houston 1) (Rochalimaea henselae).